The sequence spans 437 residues: Serine--tRNA ligase (437 aa).

244–246 (TAE) lines the L-serine pocket. Position 275–277 (275–277 (RSE)) interacts with ATP. Glutamate 298 serves as a coordination point for L-serine. Residue 362 to 365 (EISS) participates in ATP binding. Serine 397 provides a ligand contact to L-serine.

This sequence belongs to the class-II aminoacyl-tRNA synthetase family. Type-1 seryl-tRNA synthetase subfamily. In terms of assembly, homodimer. The tRNA molecule binds across the dimer.

The protein resides in the cytoplasm. It carries out the reaction tRNA(Ser) + L-serine + ATP = L-seryl-tRNA(Ser) + AMP + diphosphate + H(+). The enzyme catalyses tRNA(Sec) + L-serine + ATP = L-seryl-tRNA(Sec) + AMP + diphosphate + H(+). It participates in aminoacyl-tRNA biosynthesis; selenocysteinyl-tRNA(Sec) biosynthesis; L-seryl-tRNA(Sec) from L-serine and tRNA(Sec): step 1/1. Catalyzes the attachment of serine to tRNA(Ser). Is also able to aminoacylate tRNA(Sec) with serine, to form the misacylated tRNA L-seryl-tRNA(Sec), which will be further converted into selenocysteinyl-tRNA(Sec). In Nitrosomonas eutropha (strain DSM 101675 / C91 / Nm57), this protein is Serine--tRNA ligase.